A 493-amino-acid polypeptide reads, in one-letter code: Dihydro-heme d1 dehydrogenase (493 aa).

An N-terminal signal peptide occupies residues 1-18; it reads MRLIGLALGLLLGALAQA. One can recognise a Cytochrome c domain in the interval 19 to 96; the sequence is GEAPGEALYR…ALVAYLYQAP (78 aa). Heme c contacts are provided by C31, C34, H35, R68, and M73. Positions 114–468 are D1-heme domain; that stretch reads PHPLATLPSR…YDAHSLEEVK (355 aa). 9 residues coordinate heme d1: H165, G167, K169, R182, R207, N208, H341, R390, and H435. R182 serves as a coordination point for heme c.

The protein belongs to the cytochrome c family. As to quaternary structure, monomer. The cofactor is heme c.

It localises to the periplasm. The catalysed reaction is dihydro-heme d1 + A = heme d1 + AH2. Its pathway is porphyrin-containing compound metabolism. Functionally, involved in heme d1 biosynthesis. Catalyzes the introduction of a double bond into the propionate side chain of pyrrole ring D of dihydro-heme d1, therefore converting dihydro-heme d1 to heme d1. This is Dihydro-heme d1 dehydrogenase from Pseudomonas aeruginosa (strain ATCC 15692 / DSM 22644 / CIP 104116 / JCM 14847 / LMG 12228 / 1C / PRS 101 / PAO1).